We begin with the raw amino-acid sequence, 162 residues long: MRLTSKGRYAVTAMLDVALNSEAGPVPLADISERQGISLSYLEQLFSRLRKNGLVSSVRGPGGGYLLGKDASSIAVGEVISAVDESVDATRCQGKGGCQGGDKCLTHALWRDLSDRLTGFLNNITLGELVNNQEVLDVSGRQHTHDAPRTRIQDAIDVKLRA.

Residues 2-131 (RLTSKGRYAV…NNITLGELVN (130 aa)) enclose the HTH rrf2-type domain. A DNA-binding region (H-T-H motif) is located at residues 28–51 (LADISERQGISLSYLEQLFSRLRK). 3 residues coordinate [2Fe-2S] cluster: cysteine 92, cysteine 98, and cysteine 104.

[2Fe-2S] cluster serves as cofactor.

In terms of biological role, regulates the transcription of several operons and genes involved in the biogenesis of Fe-S clusters and Fe-S-containing proteins. The polypeptide is HTH-type transcriptional regulator IscR (Shigella sonnei (strain Ss046)).